The chain runs to 215 residues: Large ribosomal subunit protein uL16 (215 aa).

Belongs to the universal ribosomal protein uL16 family. Component of the small ribosomal subunit. Mature ribosomes consist of a small (40S) and a large (60S) subunit. The 40S subunit contains about 33 different proteins and 1 molecule of RNA (18S). The 60S subunit contains about 49 different proteins and 3 molecules of RNA (25S, 5.8S and 5S).

This Euglena gracilis protein is Large ribosomal subunit protein uL16 (RPL10).